A 436-amino-acid polypeptide reads, in one-letter code: Tol-Pal system protein TolB (436 aa).

The signal sequence occupies residues 1–28 (MEMLRRNFFRLLMVLVAGCGLIASPAKA).

Belongs to the TolB family. As to quaternary structure, the Tol-Pal system is composed of five core proteins: the inner membrane proteins TolA, TolQ and TolR, the periplasmic protein TolB and the outer membrane protein Pal. They form a network linking the inner and outer membranes and the peptidoglycan layer.

It localises to the periplasm. Functionally, part of the Tol-Pal system, which plays a role in outer membrane invagination during cell division and is important for maintaining outer membrane integrity. The protein is Tol-Pal system protein TolB of Sinorhizobium medicae (strain WSM419) (Ensifer medicae).